A 293-amino-acid chain; its full sequence is Glutamyl-Q tRNA(Asp) synthetase (293 aa).

L-glutamate is bound by residues 8 to 12 (RFAPT) and Glu-44. The 'HIGH' region signature appears at 11–21 (PTPSGYLHFGS). Zn(2+)-binding residues include Cys-100, Cys-102, Tyr-114, and Cys-118. 2 residues coordinate L-glutamate: Tyr-171 and Arg-189. The short motif at 227–231 (KLGKS) is the 'KMSKS' region element. Lys-230 is an ATP binding site.

It belongs to the class-I aminoacyl-tRNA synthetase family. GluQ subfamily. Requires Zn(2+) as cofactor.

Its function is as follows. Catalyzes the tRNA-independent activation of glutamate in presence of ATP and the subsequent transfer of glutamate onto a tRNA(Asp). Glutamate is transferred on the 2-amino-5-(4,5-dihydroxy-2-cyclopenten-1-yl) moiety of the queuosine in the wobble position of the QUC anticodon. In Pseudomonas aeruginosa (strain ATCC 15692 / DSM 22644 / CIP 104116 / JCM 14847 / LMG 12228 / 1C / PRS 101 / PAO1), this protein is Glutamyl-Q tRNA(Asp) synthetase.